The sequence spans 112 residues: Putative pterin-4-alpha-carbinolamine dehydratase (112 aa).

Belongs to the pterin-4-alpha-carbinolamine dehydratase family.

It catalyses the reaction (4aS,6R)-4a-hydroxy-L-erythro-5,6,7,8-tetrahydrobiopterin = (6R)-L-erythro-6,7-dihydrobiopterin + H2O. The protein is Putative pterin-4-alpha-carbinolamine dehydratase of Syntrophotalea carbinolica (strain DSM 2380 / NBRC 103641 / GraBd1) (Pelobacter carbinolicus).